Reading from the N-terminus, the 486-residue chain is Cardiolipin synthase A (486 aa).

2 helical membrane passes run 3 to 23 (IFYNLIKCLIFSTYWLLIANI) and 38 to 58 (MSWLLTIYIIPFIGISIWFFF). PLD phosphodiesterase domains follow at residues 219 to 246 (VDVRQHRKIILIDNYIAYSGSMNLVDPY) and 399 to 426 (QKGLLHSKSILVDQQLSLIGTVNLDMRS). Catalysis depends on residues His-224, Lys-226, Asp-231, His-404, Lys-406, and Asp-411.

This sequence belongs to the phospholipase D family. Cardiolipin synthase subfamily. ClsA sub-subfamily.

Its subcellular location is the cell inner membrane. The enzyme catalyses 2 a 1,2-diacyl-sn-glycero-3-phospho-(1'-sn-glycerol) = a cardiolipin + glycerol. In terms of biological role, catalyzes the reversible phosphatidyl group transfer from one phosphatidylglycerol molecule to another to form cardiolipin (CL) (diphosphatidylglycerol) and glycerol. In Buchnera aphidicola subsp. Acyrthosiphon pisum (strain 5A), this protein is Cardiolipin synthase A.